Here is a 363-residue protein sequence, read N- to C-terminus: Sorting nexin-21 (363 aa).

The segment covering 1–11 (MASRLLHRLRH) has biased composition (basic residues). The segment at 1–99 (MASRLLHRLR…PPPDGQRSSQ (99 aa)) is disordered. The segment covering 12 to 28 (ALASDGPGEAAAGPEAE) has biased composition (low complexity). Polar residues predominate over residues 46–56 (SRLSGTLSFTS). Residues 57-71 (AEDDPDDEDEDDEAG) show a composition bias toward acidic residues. In terms of domain architecture, PX spans 119 to 236 (QRLLFEVTSA…DFFVLPELRR (118 aa)). Residues arginine 161, serine 163, lysine 188, and arginine 202 each coordinate a 1,2-diacyl-sn-glycero-3-phospho-(1D-myo-inositol-3-phosphate).

The protein belongs to the sorting nexin family. In terms of assembly, monomer.

Its subcellular location is the cytoplasmic vesicle membrane. The protein localises to the early endosome membrane. Binds to membranes enriched in phosphatidylinositol 3-phosphate (PtdIns(P3)) and phosphatidylinositol 4,5-bisphosphate. May be involved in several stages of intracellular trafficking. The chain is Sorting nexin-21 from Mus musculus (Mouse).